Here is an 83-residue protein sequence, read N- to C-terminus: Putative beta-neurotoxin RjAa12f (83 aa).

A signal peptide spans 1–18 (MKILIFIIASFMLIGVEC). The LCN-type CS-alpha/beta domain maps to 19-82 (KEGYPMGRDG…VWDSSTNKCG (64 aa)). 4 disulfide bridges follow: Cys-29–Cys-81, Cys-33–Cys-55, Cys-40–Cys-62, and Cys-44–Cys-64. A propeptide is located at residue Gly-83.

In terms of processing, contains 4 disulfide bonds. As to expression, expressed by the venom gland.

The protein resides in the secreted. In terms of biological role, beta toxins bind voltage-independently at site-4 of sodium channels (Nav) and shift the voltage of activation toward more negative potentials thereby affecting sodium channel activation and promoting spontaneous and repetitive firing. This toxin is lethal to insects (A.domestica). It is not toxic to mice and does not affect mammal F11 sodium channels. This chain is Putative beta-neurotoxin RjAa12f, found in Rhopalurus junceus (Caribbean blue scorpion).